The following is a 152-amino-acid chain: SsrA-binding protein (152 aa).

Over residues 132–142 (REAIKKRDVSD) the composition is skewed to basic and acidic residues. The segment at 132 to 152 (REAIKKRDVSDQIRSSLRRSR) is disordered.

It belongs to the SmpB family.

The protein resides in the cytoplasm. Its function is as follows. Required for rescue of stalled ribosomes mediated by trans-translation. Binds to transfer-messenger RNA (tmRNA), required for stable association of tmRNA with ribosomes. tmRNA and SmpB together mimic tRNA shape, replacing the anticodon stem-loop with SmpB. tmRNA is encoded by the ssrA gene; the 2 termini fold to resemble tRNA(Ala) and it encodes a 'tag peptide', a short internal open reading frame. During trans-translation Ala-aminoacylated tmRNA acts like a tRNA, entering the A-site of stalled ribosomes, displacing the stalled mRNA. The ribosome then switches to translate the ORF on the tmRNA; the nascent peptide is terminated with the 'tag peptide' encoded by the tmRNA and targeted for degradation. The ribosome is freed to recommence translation, which seems to be the essential function of trans-translation. This chain is SsrA-binding protein, found in Bdellovibrio bacteriovorus (strain ATCC 15356 / DSM 50701 / NCIMB 9529 / HD100).